The following is a 493-amino-acid chain: MLQTVFLTMLTLALVKSQVTEETITYTQCTDGYEWDPVRQQCKDIDECDIVPDACKGGMKCVNHYGGYLCLPKTAQIIVNNEQPQQETPAAEASSGAATGTIAARSMATSGVIPGGGFIASATAVAGPEVQTGRNNFVIRRNPADPQRIPSNPSHRIQCAAGYEQSEHNVCQDIDECTSGTHNCRLDQVCINLRGSFTCHCLPGYQKRGEQCVDIDECSVPPYCHQGCVNTPGSFYCQCNPGFQLAANNYTCVDINECDASNQCAQQCYNILGSFICQCNQGYELSSDRLNCEDIDECRTSSYLCQYQCVNEPGKFSCMCPQGYQVVRSRTCQDINECETTNECREDEMCWNYHGGFRCYPQNPCQDPYVLTSENRCVCPVSNTMCRDVPQSIVYKYMNIRSDRSVPSDIFQIQATTIYANTINTFRIKSGNENGEFYLRQTSPVSAMLVLVKSLTGPREHIVGLEMLTVSSIGTFRTSSVLRLTIIVGPFSF.

Residues 1-17 (MLQTVFLTMLTLALVKS) form the signal peptide. Positions 26-71 (YTQCTDGYEWDPVRQQCKDIDECDIVPDACKGGMKCVNHYGGYLCL) constitute an EGF-like 1; atypical domain. The EGF-like 2; calcium-binding domain maps to 173–213 (DIDECTSGTHNCRLDQVCINLRGSFTCHCLPGYQKRGEQCV). Disulfide bonds link cysteine 177–cysteine 190, cysteine 184–cysteine 199, cysteine 201–cysteine 212, cysteine 218–cysteine 228, cysteine 224–cysteine 237, cysteine 239–cysteine 252, cysteine 258–cysteine 268, cysteine 264–cysteine 277, cysteine 279–cysteine 292, cysteine 298–cysteine 309, cysteine 305–cysteine 318, cysteine 320–cysteine 332, cysteine 338–cysteine 350, cysteine 344–cysteine 359, and cysteine 365–cysteine 377. The 40-residue stretch at 214–253 (DIDECSVPPYCHQGCVNTPGSFYCQCNPGFQLAANNYTCV) folds into the EGF-like 3; calcium-binding domain. Asparagine 249 carries N-linked (GlcNAc...) asparagine glycosylation. Residues 254 to 293 (DINECDASNQCAQQCYNILGSFICQCNQGYELSSDRLNCE) form the EGF-like 4; calcium-binding domain. Residues 259–493 (DASNQCAQQC…LTIIVGPFSF (235 aa)) are mediates interaction with TIMP3. The region spanning 294 to 333 (DIDECRTSSYLCQYQCVNEPGKFSCMCPQGYQVVRSRTCQ) is the EGF-like 5; calcium-binding domain. The EGF-like 6; calcium-binding domain maps to 334-378 (DINECETTNECREDEMCWNYHGGFRCYPQNPCQDPYVLTSENRCV).

The protein belongs to the fibulin family. As to quaternary structure, interacts with ECM1. Interacts with TIMP3. In terms of tissue distribution, expressed by olfactory ensheathing cells (at protein level). Detected in lung, intestine and kidney.

Its subcellular location is the secreted. It is found in the extracellular space. The protein localises to the extracellular matrix. In terms of biological role, binds EGFR, the EGF receptor, inducing EGFR autophosphorylation and the activation of downstream signaling pathways. May play a role in cell adhesion and migration. May function as a negative regulator of chondrocyte differentiation. In the olfactory epithelium, it may regulate glial cell migration, differentiation and the ability of glial cells to support neuronal neurite outgrowth. This chain is EGF-containing fibulin-like extracellular matrix protein 1 (Efemp1), found in Rattus norvegicus (Rat).